Reading from the N-terminus, the 562-residue chain is Formate--tetrahydrofolate ligase (562 aa).

71 to 78 (TPAGEGKS) serves as a coordination point for ATP.

This sequence belongs to the formate--tetrahydrofolate ligase family.

The enzyme catalyses (6S)-5,6,7,8-tetrahydrofolate + formate + ATP = (6R)-10-formyltetrahydrofolate + ADP + phosphate. It participates in one-carbon metabolism; tetrahydrofolate interconversion. The chain is Formate--tetrahydrofolate ligase from Bacillus cereus (strain Q1).